A 411-amino-acid polypeptide reads, in one-letter code: Phosphopentomutase (411 aa).

Residues Asp14, Asp306, His311, Asp347, His348, and His359 each contribute to the Mn(2+) site.

This sequence belongs to the phosphopentomutase family. The cofactor is Mn(2+).

It localises to the cytoplasm. The enzyme catalyses 2-deoxy-alpha-D-ribose 1-phosphate = 2-deoxy-D-ribose 5-phosphate. It catalyses the reaction alpha-D-ribose 1-phosphate = D-ribose 5-phosphate. It functions in the pathway carbohydrate degradation; 2-deoxy-D-ribose 1-phosphate degradation; D-glyceraldehyde 3-phosphate and acetaldehyde from 2-deoxy-alpha-D-ribose 1-phosphate: step 1/2. Its function is as follows. Isomerase that catalyzes the conversion of deoxy-ribose 1-phosphate (dRib-1-P) and ribose 1-phosphate (Rib-1-P) to deoxy-ribose 5-phosphate (dRib-5-P) and ribose 5-phosphate (Rib-5-P), respectively. This chain is Phosphopentomutase, found in Lactococcus lactis subsp. lactis (strain IL1403) (Streptococcus lactis).